The chain runs to 120 residues: NAD(P)H-quinone oxidoreductase subunit 3, chloroplastic (120 aa).

3 consecutive transmembrane segments (helical) span residues 9–29, 64–84, and 88–108; these read IFWA…LISG, MFAL…PWAM, and VLGV…ILGL.

The protein belongs to the complex I subunit 3 family. In terms of assembly, NDH is composed of at least 16 different subunits, 5 of which are encoded in the nucleus.

It is found in the plastid. Its subcellular location is the chloroplast thylakoid membrane. The catalysed reaction is a plastoquinone + NADH + (n+1) H(+)(in) = a plastoquinol + NAD(+) + n H(+)(out). The enzyme catalyses a plastoquinone + NADPH + (n+1) H(+)(in) = a plastoquinol + NADP(+) + n H(+)(out). NDH shuttles electrons from NAD(P)H:plastoquinone, via FMN and iron-sulfur (Fe-S) centers, to quinones in the photosynthetic chain and possibly in a chloroplast respiratory chain. The immediate electron acceptor for the enzyme in this species is believed to be plastoquinone. Couples the redox reaction to proton translocation, and thus conserves the redox energy in a proton gradient. This is NAD(P)H-quinone oxidoreductase subunit 3, chloroplastic from Lobularia maritima (Sweet alyssum).